The chain runs to 81 residues: Cytotoxin 3d (81 aa).

An N-terminal signal peptide occupies residues 1–21; sequence MKTLLLTLVVVTIVCLDLGYT. 4 disulfides stabilise this stretch: cysteine 24–cysteine 42, cysteine 35–cysteine 59, cysteine 63–cysteine 74, and cysteine 75–cysteine 80.

Belongs to the three-finger toxin family. Short-chain subfamily. Type IA cytotoxin sub-subfamily. As to quaternary structure, monomer in solution; Homodimer and oligomer in the presence of negatively charged lipids forming a pore with a size ranging between 20 and 30 Angstroms. In terms of tissue distribution, expressed by the venom gland.

Its subcellular location is the secreted. It is found in the target cell membrane. Its function is as follows. Shows cytolytic activity on many different cells by forming pore in lipid membranes. In vivo, increases heart rate or kills the animal by cardiac arrest. In addition, it binds to heparin with high affinity, interacts with Kv channel-interacting protein 1 (KCNIP1) in a calcium-independent manner, and binds to integrin alpha-V/beta-3 (ITGAV/ITGB3) with moderate affinity. The polypeptide is Cytotoxin 3d (Naja atra (Chinese cobra)).